A 373-amino-acid chain; its full sequence is Cell division protein FtsZ 1 (373 aa).

GTP-binding positions include 51–55 (GAGCN), 138–140 (GTG), glutamate 169, arginine 173, and aspartate 216. The segment at 354–373 (EESYFGEEERRPIKLDLDEL) is disordered. Positions 360–373 (EEERRPIKLDLDEL) are enriched in basic and acidic residues.

Belongs to the FtsZ family. In terms of assembly, homodimer. Polymerizes to form a dynamic ring structure in a strictly GTP-dependent manner. Interacts directly with several other division proteins.

It is found in the cytoplasm. In terms of biological role, essential cell division protein that forms a contractile ring structure (Z ring) at the future cell division site. The regulation of the ring assembly controls the timing and the location of cell division. One of the functions of the FtsZ ring is to recruit other cell division proteins to the septum to produce a new cell wall between the dividing cells. Binds GTP and shows GTPase activity. In Thermococcus kodakarensis (strain ATCC BAA-918 / JCM 12380 / KOD1) (Pyrococcus kodakaraensis (strain KOD1)), this protein is Cell division protein FtsZ 1.